The chain runs to 165 residues: Transcription elongation factor GreA (165 aa).

A coiled-coil region spans residues 55–78 (AAKEEQGKQELRVRQLTQLLENAK).

The protein belongs to the GreA/GreB family.

In terms of biological role, necessary for efficient RNA polymerase transcription elongation past template-encoded arresting sites. The arresting sites in DNA have the property of trapping a certain fraction of elongating RNA polymerases that pass through, resulting in locked ternary complexes. Cleavage of the nascent transcript by cleavage factors such as GreA or GreB allows the resumption of elongation from the new 3'terminus. GreA releases sequences of 2 to 3 nucleotides. This is Transcription elongation factor GreA from Streptomyces avermitilis (strain ATCC 31267 / DSM 46492 / JCM 5070 / NBRC 14893 / NCIMB 12804 / NRRL 8165 / MA-4680).